We begin with the raw amino-acid sequence, 93 residues long: Alpha-defensin 9 (93 aa).

A signal peptide spans 1-19 (MKTLVLLSALVLLAFQVQA). Positions 20-58 (DPIQNTDEETKTEEQPGEEDQAVSVSFGDPEGSSLQEES) are excised as a propeptide. Residues 23 to 56 (QNTDEETKTEEQPGEEDQAVSVSFGDPEGSSLQE) form a disordered region. Disulfide bonds link C64/C92, C66/C81, and C71/C91.

The protein belongs to the alpha-defensin family. Paneth cells of the small bowel.

The protein resides in the secreted. Probably contributes to the antimicrobial barrier function of the small bowel mucosa. The polypeptide is Alpha-defensin 9 (Defa9) (Mus musculus (Mouse)).